The sequence spans 165 residues: HTH-type transcriptional regulator IscR (165 aa).

One can recognise an HTH rrf2-type domain in the interval 2–131 (RLTSKGRYAV…NNITLAELVN (130 aa)). Positions 28 to 51 (LADISERQGISLSYLEQLFSRLRK) form a DNA-binding region, H-T-H motif. Residues C92, C98, and C104 each coordinate [2Fe-2S] cluster.

It depends on [2Fe-2S] cluster as a cofactor.

Its function is as follows. Regulates the transcription of several operons and genes involved in the biogenesis of Fe-S clusters and Fe-S-containing proteins. This is HTH-type transcriptional regulator IscR from Erwinia tasmaniensis (strain DSM 17950 / CFBP 7177 / CIP 109463 / NCPPB 4357 / Et1/99).